Reading from the N-terminus, the 149-residue chain is Cytochrome c-555 (149 aa).

The signal sequence occupies residues 1-20 (MKRTMIVVTTLLLGAGAVMA). The heme c site is built by M32, C137, C140, and H141.

As to quaternary structure, monomer. Post-translationally, binds 1 heme c group covalently per subunit.

It localises to the periplasm. Low-spin monoheme cytochrome. The polypeptide is Cytochrome c-555 (cycC) (Bradyrhizobium diazoefficiens (strain JCM 10833 / BCRC 13528 / IAM 13628 / NBRC 14792 / USDA 110)).